We begin with the raw amino-acid sequence, 142 residues long: Large ribosomal subunit protein uL23 (142 aa).

The protein belongs to the universal ribosomal protein uL23 family.

This is Large ribosomal subunit protein uL23 (RPL25) from Kluyveromyces lactis (strain ATCC 8585 / CBS 2359 / DSM 70799 / NBRC 1267 / NRRL Y-1140 / WM37) (Yeast).